A 342-amino-acid polypeptide reads, in one-letter code: Oxygen-dependent coproporphyrinogen-III oxidase (342 aa).

Ser-107 provides a ligand contact to substrate. Residues His-111 and His-121 each coordinate a divalent metal cation. His-121 serves as the catalytic Proton donor. Position 123-125 (123-125 (NYR)) interacts with substrate. 2 residues coordinate a divalent metal cation: His-155 and His-185. Residues 277–312 (YVEFNLVYDRGTIFGLQTNGRTESILMSLPPLVRWE) are important for dimerization.

Belongs to the aerobic coproporphyrinogen-III oxidase family. As to quaternary structure, homodimer. Requires a divalent metal cation as cofactor.

Its subcellular location is the cytoplasm. The catalysed reaction is coproporphyrinogen III + O2 + 2 H(+) = protoporphyrinogen IX + 2 CO2 + 2 H2O. Its pathway is porphyrin-containing compound metabolism; protoporphyrin-IX biosynthesis; protoporphyrinogen-IX from coproporphyrinogen-III (O2 route): step 1/1. Functionally, involved in the heme and chlorophyll biosynthesis. Catalyzes the aerobic oxidative decarboxylation of propionate groups of rings A and B of coproporphyrinogen-III to yield the vinyl groups in protoporphyrinogen-IX. The polypeptide is Oxygen-dependent coproporphyrinogen-III oxidase (Synechococcus sp. (strain ATCC 27144 / PCC 6301 / SAUG 1402/1) (Anacystis nidulans)).